The sequence spans 333 residues: DNA-directed RNA polymerase subunit alpha (333 aa).

An alpha N-terminal domain (alpha-NTD) region spans residues 1–233 (MVREKVKVST…NLFIPFLHVE (233 aa)). An alpha C-terminal domain (alpha-CTD) region spans residues 267–333 (LVFQYIFIDQ…LEKNRKFISN (67 aa)).

This sequence belongs to the RNA polymerase alpha chain family. In plastids the minimal PEP RNA polymerase catalytic core is composed of four subunits: alpha, beta, beta', and beta''. When a (nuclear-encoded) sigma factor is associated with the core the holoenzyme is formed, which can initiate transcription.

The protein localises to the plastid. It localises to the chloroplast. It catalyses the reaction RNA(n) + a ribonucleoside 5'-triphosphate = RNA(n+1) + diphosphate. Its function is as follows. DNA-dependent RNA polymerase catalyzes the transcription of DNA into RNA using the four ribonucleoside triphosphates as substrates. The polypeptide is DNA-directed RNA polymerase subunit alpha (Aethionema grandiflorum (Persian stone-cress)).